Reading from the N-terminus, the 483-residue chain is UDP-N-acetylmuramate--L-alanine ligase (483 aa).

112–118 (GTHGKTT) provides a ligand contact to ATP.

The protein belongs to the MurCDEF family.

The protein resides in the cytoplasm. It catalyses the reaction UDP-N-acetyl-alpha-D-muramate + L-alanine + ATP = UDP-N-acetyl-alpha-D-muramoyl-L-alanine + ADP + phosphate + H(+). Its pathway is cell wall biogenesis; peptidoglycan biosynthesis. Cell wall formation. In Ralstonia pickettii (strain 12J), this protein is UDP-N-acetylmuramate--L-alanine ligase.